The following is an 839-amino-acid chain: MTMVETNIKTMSVFANPTPTLSREDIADAVRRAEQRIAPLWPLRNFVAVNPYLGLIDHSFAQAAHVLACRAGARMTLPRSFYAQAIACGRITDDDLAAALAEGIPFRNAPETVAALKAFARDNAPEPVGNVLPTVADLAAKVTGSNWSTIVTDSISNWAGAYFDQGQSYWRSPWAKLPAYEAWRAEAAFDRTPLVRGARAFHRVLRAMPGTAAETIAVAIEQLQVPATGLEAYLHRLLLSIHGWASYARYLRWEAELYGGHDKTLTDLLAIRLVWEVALWQSFARDGVAAAWERSIDEMRHGQDDDEYKRVLGGDLLLQRAFEYAYRRQLFAQLGVAAPGTPVTRKRVQAAFCIDVRSEIFRRALETVSGEIETIGFAGFFGFPIEYIPLAEVEGGAQCPVLLTPQFVITESVDGATPSEVEAAITKRAMRQRVAKAWRMFKFAPVSCFGFVGPVGLAYVRKLLLDTLGITRPVPHPATFGLDGQTRARVKPSLEPRPFNGRLIGMSLPQRIAAAAGALKAMSLTDNFARIVLLAGHGSTTVNNPHATGLDCGACGGHTGEANVRVAVQILNDPAVRAGLREHGIVIPSDTVFVAGLHDTTTDDVTIFDKGDIPASHADDLQRLERDLVAAGRLARAERAALLNVDRNTDIDRAVRRRSTDWSQVRPEWGLAGCAAFIAAPRERTAGISLDGRAFLHNYNWRQDGDFSVLELIMTAPMIVASWINLQYFGSTVDNRVFGSGNKTLHNVVGTLGVLEGNGGDLRVGLPWQSVHDGKRYVHEPIRLHVLIEAPIEAMTAIITKHEQVQQLLDNDWLYLFAIGENGKVTHRYTGGLRWETCA.

Residues Cys-353, Asp-355, His-537, and Cys-552 each contribute to the Zn(2+) site.

The protein belongs to the inorganic carbon transporter (TC 9.A.2) DabA family. Forms a complex with DabB. Zn(2+) is required as a cofactor.

It localises to the cell membrane. In terms of biological role, part of an energy-coupled inorganic carbon pump. The polypeptide is Probable inorganic carbon transporter subunit DabA (Chloroflexus aggregans (strain MD-66 / DSM 9485)).